A 96-amino-acid polypeptide reads, in one-letter code: Muconolactone Delta-isomerase 1 (96 aa).

This sequence belongs to the muconolactone Delta-isomerase family. Homodecamer.

The catalysed reaction is (S)-muconolactone = (4,5-dihydro-5-oxofuran-2-yl)-acetate. It functions in the pathway aromatic compound metabolism; beta-ketoadipate pathway; 5-oxo-4,5-dihydro-2-furylacetate from catechol: step 3/3. The polypeptide is Muconolactone Delta-isomerase 1 (catC1) (Acinetobacter lwoffii).